The following is a 350-amino-acid chain: UDP-N-acetylenolpyruvoylglucosamine reductase (350 aa).

The FAD-binding PCMH-type domain occupies 24-195 (HVEATARWLL…VAVEFNLPLL (172 aa)). Residue arginine 172 is part of the active site. The Proton donor role is filled by serine 245. The active site involves glutamate 342.

It belongs to the MurB family. Requires FAD as cofactor.

The protein localises to the cytoplasm. The catalysed reaction is UDP-N-acetyl-alpha-D-muramate + NADP(+) = UDP-N-acetyl-3-O-(1-carboxyvinyl)-alpha-D-glucosamine + NADPH + H(+). Its pathway is cell wall biogenesis; peptidoglycan biosynthesis. Its function is as follows. Cell wall formation. The protein is UDP-N-acetylenolpyruvoylglucosamine reductase of Xanthomonas oryzae pv. oryzae (strain PXO99A).